Reading from the N-terminus, the 390-residue chain is Putative transposase y4qE (390 aa).

Belongs to the transposase IS1111A/IS1328/IS1533 family.

The protein is Putative transposase y4qE of Sinorhizobium fredii (strain NBRC 101917 / NGR234).